We begin with the raw amino-acid sequence, 417 residues long: Inactive GDSL esterase/lipase-like protein 25 (417 aa).

Positions 1-50 are cleaved as a signal peptide; the sequence is MLLIPSFTANSNEPPPSKLSLSDLSMAILKSHFFLLFPLLLLHFHTVSFA. N-linked (GlcNAc...) asparagine glycosylation is found at Asn160, Asn308, and Asn311. Residue His331 is part of the active site.

Belongs to the 'GDSL' lipolytic enzyme family. Interacts with the PYK10 complex and TGG2, but not with TGG1 or PEN2. Expressed throughout the seedling, rosette leaves, roots, inflorescence and imbibed seed, but not in pollen.

Its subcellular location is the vacuole. The protein localises to the endoplasmic reticulum. In terms of biological role, involved in organization of the endomembrane system and is required for endoplasmic reticulum morphology and organelle distribution. May act by inhibiting the formation of PYK10 complex by binding to GLL23 and exporting it from the ER. Required for proper subcellular localization of myrosinase TGG2. Has no lipase or esterase activity. The sequence is that of Inactive GDSL esterase/lipase-like protein 25 (MVP1) from Arabidopsis thaliana (Mouse-ear cress).